Here is a 109-residue protein sequence, read N- to C-terminus: Small ribosomal subunit protein bS18c (109 aa).

The segment at 82-109 is disordered; that stretch reads GFERSESTPRTNALKPRNKNKQNNQTQF.

The protein belongs to the bacterial ribosomal protein bS18 family. Part of the 30S ribosomal subunit.

The protein localises to the plastid. The protein is Small ribosomal subunit protein bS18c of Cuscuta reflexa (Southern Asian dodder).